Here is a 224-residue protein sequence, read N- to C-terminus: Ribose-5-phosphate isomerase A (224 aa).

Residues 34-37, 87-90, and 100-103 contribute to the substrate site; these read TGST, DGAD, and KGGG. The Proton acceptor role is filled by glutamate 109. Residue lysine 127 coordinates substrate.

The protein belongs to the ribose 5-phosphate isomerase family. As to quaternary structure, homodimer.

It catalyses the reaction aldehydo-D-ribose 5-phosphate = D-ribulose 5-phosphate. Its pathway is carbohydrate degradation; pentose phosphate pathway; D-ribose 5-phosphate from D-ribulose 5-phosphate (non-oxidative stage): step 1/1. Its function is as follows. Catalyzes the reversible conversion of ribose-5-phosphate to ribulose 5-phosphate. The polypeptide is Ribose-5-phosphate isomerase A (Francisella tularensis subsp. tularensis (strain FSC 198)).